Here is a 361-residue protein sequence, read N- to C-terminus: 5-formaminoimidazole-4-carboxamide-1-(beta)-D-ribofuranosyl 5'-monophosphate synthetase (361 aa).

5-amino-1-(5-phospho-beta-D-ribosyl)imidazole-4-carboxamide contacts are provided by His-27 and Ser-94. Residues 116 to 348 (RQILRWEAER…MGQRIAKEIK (233 aa)) form the ATP-grasp domain. Residues 146–208 (PDEI…TNYC) and Glu-230 each bind ATP. Asn-258 contacts 5-amino-1-(5-phospho-beta-D-ribosyl)imidazole-4-carboxamide. Mg(2+) is bound by residues Gln-297 and Glu-310.

This sequence belongs to the phosphohexose mutase family. The cofactor is Mg(2+). Mn(2+) serves as cofactor.

The enzyme catalyses 5-amino-1-(5-phospho-beta-D-ribosyl)imidazole-4-carboxamide + formate + ATP = 5-formamido-1-(5-phospho-D-ribosyl)imidazole-4-carboxamide + ADP + phosphate. It participates in purine metabolism; IMP biosynthesis via de novo pathway; 5-formamido-1-(5-phospho-D-ribosyl)imidazole-4-carboxamide from 5-amino-1-(5-phospho-D-ribosyl)imidazole-4-carboxamide (formate route): step 1/1. Catalyzes the ATP- and formate-dependent formylation of 5-aminoimidazole-4-carboxamide-1-beta-d-ribofuranosyl 5'-monophosphate (AICAR) to 5-formaminoimidazole-4-carboxamide-1-beta-d-ribofuranosyl 5'-monophosphate (FAICAR) in the absence of folates. This Methanococcus aeolicus (strain ATCC BAA-1280 / DSM 17508 / OCM 812 / Nankai-3) protein is 5-formaminoimidazole-4-carboxamide-1-(beta)-D-ribofuranosyl 5'-monophosphate synthetase.